The following is a 338-amino-acid chain: Alanine racemase (338 aa).

Lys-33 (proton acceptor; specific for D-alanine) is an active-site residue. The residue at position 33 (Lys-33) is an N6-(pyridoxal phosphate)lysine. A substrate-binding site is contributed by Arg-126. The active-site Proton acceptor; specific for L-alanine is Tyr-236. Substrate is bound at residue Met-284.

Belongs to the alanine racemase family. Requires pyridoxal 5'-phosphate as cofactor.

It carries out the reaction L-alanine = D-alanine. It functions in the pathway amino-acid biosynthesis; D-alanine biosynthesis; D-alanine from L-alanine: step 1/1. In terms of biological role, catalyzes the interconversion of L-alanine and D-alanine. May also act on other amino acids. The sequence is that of Alanine racemase (alr) from Aquifex aeolicus (strain VF5).